Here is a 464-residue protein sequence, read N- to C-terminus: Galactose-proton symporter (464 aa).

Residues 1 to 15 (MPDAKKQGRSNKAMT) lie on the Cytoplasmic side of the membrane. Residues 16-36 (FFVCFLAALAGLLFGLDIGVI) traverse the membrane as a helical segment. The Periplasmic portion of the chain corresponds to 37–56 (AGALPFIADEFQITSHTQEW). A helical membrane pass occupies residues 57–77 (VVSSMMFGAAVGAVGSGWLSF). Residues 78 to 84 (KLGRKKS) lie on the Cytoplasmic side of the membrane. Residues 85–105 (LMIGAILFVAGSLFSAAAPNV) form a helical membrane-spanning segment. The Periplasmic segment spans residues 106 to 112 (EVLILSR). A helical transmembrane segment spans residues 113–133 (VLLGLAVGVASYTAPLYLSEI). At 134–139 (APEKIR) the chain is on the cytoplasmic side. The chain crosses the membrane as a helical span at residues 140–160 (GSMISMYQLMITIGILGAYLS). Residues 161-171 (DTAFSYTGAWR) are Periplasmic-facing. Residues 172–192 (WMLGVIIIPAILLLIGVFFLP) form a helical membrane-spanning segment. At 193–250 (DSPRWFAAKRRFVDAERVLLRLRDTSAEAKRELDEIRESLQVKQSGWALFKENSNFRR) the chain is on the cytoplasmic side. The helical transmembrane segment at 251-271 (AVFLGVLLQVMQQFTGMNVIM) threads the bilayer. Topologically, residues 272-290 (YYAPKIFELAGYTNTTEQM) are periplasmic. Residues 291-311 (WGTVIVGLTNVLATFIAIGLV) traverse the membrane as a helical segment. The Cytoplasmic portion of the chain corresponds to 312 to 321 (DRWGRKPTLT). The chain crosses the membrane as a helical span at residues 322-342 (LGFLVMAAGMGVLGTMMHIGI). Residues 343–351 (HSPSAQYFA) are Periplasmic-facing. Residues 352-372 (IAMLLMFIVGFAMSAGPLIWV) traverse the membrane as a helical segment. The Cytoplasmic portion of the chain corresponds to 373-394 (LCSEIQPLKGRDFGITCSTATN). Residues 395 to 415 (WIANMIVGATFLTMLNTLGNA) form a helical membrane-spanning segment. Position 416 (Asn416) is a topological domain, periplasmic. The helical transmembrane segment at 417-437 (TFWVYAALNVLFILLTLWLVP) threads the bilayer. The Cytoplasmic segment spans residues 438–464 (ETKHVSLEHIERNLMKGRKLREIGAHD).

Belongs to the major facilitator superfamily. Sugar transporter (TC 2.A.1.1) family.

It localises to the cell inner membrane. Its function is as follows. Uptake of galactose across the boundary membrane with the concomitant transport of protons into the cell (symport system). The sequence is that of Galactose-proton symporter (galP) from Escherichia coli O6:H1 (strain CFT073 / ATCC 700928 / UPEC).